A 906-amino-acid polypeptide reads, in one-letter code: Inactive angiotensin-converting enzyme-related protein (906 aa).

An N-terminal signal peptide occupies residues 1–19 (MKFHILLLLLVGACLPVFT). Positions 28-95 (LLPADEAPKD…SPTPEPEPAI (68 aa)) are disordered. Residues 67-83 (PEPKPEPEPEPEPKPEP) show a composition bias toward basic and acidic residues. N159 carries N-linked (GlcNAc...) asparagine glycosylation. One can recognise a Peptidase M2 domain in the interval 175 to 765 (IKDEEKLRSW…EIDQVVVGWD (591 aa)). Cysteines 289 and 297 form a disulfide. The N-linked (GlcNAc...) asparagine glycan is linked to N653. A disordered region spans residues 862 to 882 (VTTPEPSAEPEPTAKTTTKMP). Residues 863 to 882 (TTPEPSAEPEPTAKTTTKMP) show a composition bias toward low complexity.

The protein belongs to the peptidase M2 family. Expressed in the hypodermis, in the vulva during organogenesis, and in the ray papillae of the male tail.

Its function is as follows. Inactive as a metallopeptidase, due to a lack of active site residues. Required for larval molting, male tail development, and formation of adult alae. Acts in the heterochronic pathway and plays a role in the developmental timing of postembryonic hypodermal seam cell division and adult alae production. Acts synergistically with apl-1 in let-7 regulated postembryonic cell division events. Might act downstream of the heterochronic protein lin-41. Negative regulator of lifespan, heat and oxidative stress response and age-related degenerative changes like reduced pharyngeal pumping and decreased body movements. Lifespan restriction is dependent on the forkhead-type transcription factor daf-16. The protein is Inactive angiotensin-converting enzyme-related protein of Caenorhabditis elegans.